The chain runs to 89 residues: Small ribosomal subunit protein bS20 (89 aa).

Positions 68–89 (PNKGARKSSRLDHFVNEQKSKQ) are disordered. Residues 76 to 89 (SRLDHFVNEQKSKQ) are compositionally biased toward basic and acidic residues.

Belongs to the bacterial ribosomal protein bS20 family.

In terms of biological role, binds directly to 16S ribosomal RNA. The sequence is that of Small ribosomal subunit protein bS20 from Mycoplasmopsis agalactiae (strain NCTC 10123 / CIP 59.7 / PG2) (Mycoplasma agalactiae).